A 370-amino-acid polypeptide reads, in one-letter code: S-adenosylmethionine:tRNA ribosyltransferase-isomerase (370 aa).

This sequence belongs to the QueA family. In terms of assembly, monomer.

It localises to the cytoplasm. It carries out the reaction 7-aminomethyl-7-carbaguanosine(34) in tRNA + S-adenosyl-L-methionine = epoxyqueuosine(34) in tRNA + adenine + L-methionine + 2 H(+). The protein operates within tRNA modification; tRNA-queuosine biosynthesis. Transfers and isomerizes the ribose moiety from AdoMet to the 7-aminomethyl group of 7-deazaguanine (preQ1-tRNA) to give epoxyqueuosine (oQ-tRNA). This chain is S-adenosylmethionine:tRNA ribosyltransferase-isomerase, found in Prochlorococcus marinus (strain SARG / CCMP1375 / SS120).